The primary structure comprises 141 residues: Large ribosomal subunit protein uL11 (141 aa).

This sequence belongs to the universal ribosomal protein uL11 family. In terms of assembly, part of the ribosomal stalk of the 50S ribosomal subunit. Interacts with L10 and the large rRNA to form the base of the stalk. L10 forms an elongated spine to which L12 dimers bind in a sequential fashion forming a multimeric L10(L12)X complex. In terms of processing, one or more lysine residues are methylated.

Forms part of the ribosomal stalk which helps the ribosome interact with GTP-bound translation factors. This Prochlorococcus marinus (strain MIT 9211) protein is Large ribosomal subunit protein uL11.